Consider the following 183-residue polypeptide: Large ribosomal subunit protein bL27m (183 aa).

Residues 1-34 (MFLRPTSIPSAVSQIRAQLFAGPSSLASQIQVRW) constitute a mitochondrion transit peptide.

The protein belongs to the bacterial ribosomal protein bL27 family.

The protein localises to the mitochondrion. This is Large ribosomal subunit protein bL27m (RPL27) from Cryptococcus neoformans var. neoformans serotype D (strain B-3501A) (Filobasidiella neoformans).